We begin with the raw amino-acid sequence, 326 residues long: MFISISAGVVTFLITLVGIPAFIQFYRKAQITGQQMHEDVKQHQAKAGTPTMGGLVFLIAAVVVSFLLALFSKQLTNNVGMILFILVLYGLVGFLDDFLKVFRKINEGLNPKQKLALQLLGGVIFYLFYERGGDMLSVFSYQVHLGIFYIIFALFWLVGFSNAVNLTDGIDGLASISVVISLSAYGVIAYVQGQMDILLVILAMIGGLLGFFVFNHKPAKVFMGDVGSLALGGMLAAISMALHQEWTLLIIGIVYVFETTSVMMQVSYFKLTGGKRIFRMTPVHHHFELGGLSGKGNPWSEWKVDFFFWGVGLLASLLTLAILYLM.

Transmembrane regions (helical) follow at residues 3–23, 51–71, 79–99, 115–135, 138–158, 169–189, 195–215, 221–243, and 306–326; these read ISISAGVVTFLITLVGIPAFI, TMGGLVFLIAAVVVSFLLALF, VGMILFILVLYGLVGFLDDFL, LALQLLGGVIFYLFYERGGDM, VFSYQVHLGIFYIIFALFWLV, GIDGLASISVVISLSAYGVIA, MDILLVILAMIGGLLGFFVFN, VFMGDVGSLALGGMLAAISMALH, and FFFWGVGLLASLLTLAILYLM.

Belongs to the glycosyltransferase 4 family. MraY subfamily. It depends on Mg(2+) as a cofactor.

It is found in the cell membrane. The catalysed reaction is UDP-N-acetyl-alpha-D-muramoyl-L-alanyl-gamma-D-glutamyl-L-lysyl-D-alanyl-D-alanine + di-trans,octa-cis-undecaprenyl phosphate = Mur2Ac(oyl-L-Ala-gamma-D-Glu-L-Lys-D-Ala-D-Ala)-di-trans,octa-cis-undecaprenyl diphosphate + UMP. The protein operates within cell wall biogenesis; peptidoglycan biosynthesis. Functionally, catalyzes the initial step of the lipid cycle reactions in the biosynthesis of the cell wall peptidoglycan: transfers peptidoglycan precursor phospho-MurNAc-pentapeptide from UDP-MurNAc-pentapeptide onto the lipid carrier undecaprenyl phosphate, yielding undecaprenyl-pyrophosphoryl-MurNAc-pentapeptide, known as lipid I. The polypeptide is Phospho-N-acetylmuramoyl-pentapeptide-transferase (Streptococcus pneumoniae (strain ATCC 700669 / Spain 23F-1)).